Consider the following 316-residue polypeptide: MHAYTLIAPGKINLYLEIIGDRPDGYHELIMILQSIDLADRITLRPNGVQQFRLYCSHPQVPTDESNLAYRAAKLMQQEFPKQFDNFGGVDITIDKRIPVAAGLAGGSTNGAAVLVGLNLIWQLGLTQPELQGLASLLGSDVPFCVSGGTAIATGRGEQLDPIYDLDNLWVVLAKYTSIAVSTPWAYKTYRQLFNNTYISDRERIQARTHQVHAGPLMGAILQKDGAKIGRLLHNDLEKVVLPEYPQVAHLRETMAKMGGFGTMMSGSGPTVFTLCESYAQAEKIKQHIRENISDIDLQLWVAQLSNMGIQVEIAG.

The active site involves Lys11. Pro99–Thr109 is an ATP binding site. The active site involves Asp141.

It belongs to the GHMP kinase family. IspE subfamily.

The catalysed reaction is 4-CDP-2-C-methyl-D-erythritol + ATP = 4-CDP-2-C-methyl-D-erythritol 2-phosphate + ADP + H(+). Its pathway is isoprenoid biosynthesis; isopentenyl diphosphate biosynthesis via DXP pathway; isopentenyl diphosphate from 1-deoxy-D-xylulose 5-phosphate: step 3/6. Its function is as follows. Catalyzes the phosphorylation of the position 2 hydroxy group of 4-diphosphocytidyl-2C-methyl-D-erythritol. This chain is 4-diphosphocytidyl-2-C-methyl-D-erythritol kinase, found in Gloeothece citriformis (strain PCC 7424) (Cyanothece sp. (strain PCC 7424)).